The primary structure comprises 661 residues: UvrABC system protein B (661 aa).

One can recognise a Helicase ATP-binding domain in the interval 28–414 (KGVKEGKRHQ…HTDEMIEQII (387 aa)). 41 to 48 (GATGTGKT) is an ATP binding site. The Beta-hairpin motif lies at 94–117 (YYDYYQPEAYVPSTDTFIEKDASI). Residues 432–598 (QIDDLLSEIQ…TINKKIHDVI (167 aa)) enclose the Helicase C-terminal domain. Residues 604 to 625 (NDETNEKQQTELPKKMTKKERQ) are disordered. A compositionally biased stretch (basic and acidic residues) spans 607 to 617 (TNEKQQTELPK). One can recognise a UVR domain in the interval 625 to 660 (QKTIENIEKEMKKAAKDLDFEKATELRDMLFELKSE).

Belongs to the UvrB family. As to quaternary structure, forms a heterotetramer with UvrA during the search for lesions. Interacts with UvrC in an incision complex.

The protein resides in the cytoplasm. In terms of biological role, the UvrABC repair system catalyzes the recognition and processing of DNA lesions. A damage recognition complex composed of 2 UvrA and 2 UvrB subunits scans DNA for abnormalities. Upon binding of the UvrA(2)B(2) complex to a putative damaged site, the DNA wraps around one UvrB monomer. DNA wrap is dependent on ATP binding by UvrB and probably causes local melting of the DNA helix, facilitating insertion of UvrB beta-hairpin between the DNA strands. Then UvrB probes one DNA strand for the presence of a lesion. If a lesion is found the UvrA subunits dissociate and the UvrB-DNA preincision complex is formed. This complex is subsequently bound by UvrC and the second UvrB is released. If no lesion is found, the DNA wraps around the other UvrB subunit that will check the other stand for damage. The chain is UvrABC system protein B from Staphylococcus haemolyticus (strain JCSC1435).